Consider the following 228-residue polypeptide: PKHD-type hydroxylase Reut_A2877 (228 aa).

A Fe2OG dioxygenase domain is found at 80-180; sequence IVYPPMFNRY…RVASFFWIQS (101 aa). Fe cation-binding residues include H98, D100, and H161. Residue R171 coordinates 2-oxoglutarate.

It depends on Fe(2+) as a cofactor. Requires L-ascorbate as cofactor.

The protein is PKHD-type hydroxylase Reut_A2877 of Cupriavidus pinatubonensis (strain JMP 134 / LMG 1197) (Cupriavidus necator (strain JMP 134)).